Consider the following 143-residue polypeptide: Transcriptional regulator SlyA (143 aa).

One can recognise an HTH marR-type domain in the interval 2 to 135 (ESTLGSDLAR…LSGLIDKLEK (134 aa)). Positions 49–72 (QIQLAKAIGIEQPSLVRTLDQLEE) form a DNA-binding region, H-T-H motif.

The protein belongs to the SlyA family. In terms of assembly, homodimer.

Transcription regulator that can specifically activate or repress expression of target genes. This is Transcriptional regulator SlyA from Yersinia pestis bv. Antiqua (strain Antiqua).